Reading from the N-terminus, the 349-residue chain is MSIDKMSLRKRVENIERISIIPEGTKSEDTKGRIIKENQDDIRTVFMVDRDRIIHSKSFRRLKHKTQVYIKTWGDHYRTRLTHTLEVAQIGKTIGKSIGLNEDLIEAIALGHDIGHVAFAHSGEEVLNELLPNGFKHNINSIRVLTKIEKQGKGLNLTKEVLDGILHHSGFSNKKDITKAFTLEGQVVKYSDKIAYVNHDIDDSIRAGLLHESDLPKDLINVLGRNHSDRIDTLVKDCINKTLENIKLGTIEVGMSEKIEIALKELRKFMFQRVYKGSILKEERDKAKFVLYQVFNYYLKNSNKMPEFYKNIVEQEGLYQGVADYISGMSDDYCLLLFNNIYVPKIVIY.

Residues 80-197 (RLTHTLEVAQ…VKYSDKIAYV (118 aa)) form the HD domain.

The protein belongs to the dGTPase family. Type 2 subfamily.

In Clostridium tetani (strain Massachusetts / E88), this protein is Deoxyguanosinetriphosphate triphosphohydrolase-like protein.